A 158-amino-acid chain; its full sequence is Transcription elongation factor GreA (158 aa).

This sequence belongs to the GreA/GreB family.

Its function is as follows. Necessary for efficient RNA polymerase transcription elongation past template-encoded arresting sites. The arresting sites in DNA have the property of trapping a certain fraction of elongating RNA polymerases that pass through, resulting in locked ternary complexes. Cleavage of the nascent transcript by cleavage factors such as GreA or GreB allows the resumption of elongation from the new 3'terminus. GreA releases sequences of 2 to 3 nucleotides. In Methylobacterium nodulans (strain LMG 21967 / CNCM I-2342 / ORS 2060), this protein is Transcription elongation factor GreA.